Here is a 469-residue protein sequence, read N- to C-terminus: Tryptophan biosynthesis protein TrpCF (469 aa).

An indole-3-glycerol phosphate synthase region spans residues 1 to 271; sequence MSEQLSEHIS…LAVRKIVLGE (271 aa). The tract at residues 272 to 469 is N-(5'-phosphoribosyl)anthranilate isomerase; sequence HKVCGLTHPD…QQVFQQLRNY (198 aa).

The protein in the N-terminal section; belongs to the TrpC family. This sequence in the C-terminal section; belongs to the TrpF family. In terms of assembly, monomer.

It carries out the reaction N-(5-phospho-beta-D-ribosyl)anthranilate = 1-(2-carboxyphenylamino)-1-deoxy-D-ribulose 5-phosphate. The catalysed reaction is 1-(2-carboxyphenylamino)-1-deoxy-D-ribulose 5-phosphate + H(+) = (1S,2R)-1-C-(indol-3-yl)glycerol 3-phosphate + CO2 + H2O. It participates in amino-acid biosynthesis; L-tryptophan biosynthesis; L-tryptophan from chorismate: step 3/5. The protein operates within amino-acid biosynthesis; L-tryptophan biosynthesis; L-tryptophan from chorismate: step 4/5. In terms of biological role, bifunctional enzyme that catalyzes two sequential steps of tryptophan biosynthetic pathway. The first reaction is catalyzed by the isomerase, coded by the TrpF domain; the second reaction is catalyzed by the synthase, coded by the TrpC domain. The sequence is that of Tryptophan biosynthesis protein TrpCF (trpCF) from Vibrio cholerae serotype O1 (strain ATCC 39315 / El Tor Inaba N16961).